Consider the following 186-residue polypeptide: ATP synthase subunit delta (186 aa).

It belongs to the ATPase delta chain family. In terms of assembly, F-type ATPases have 2 components, F(1) - the catalytic core - and F(0) - the membrane proton channel. F(1) has five subunits: alpha(3), beta(3), gamma(1), delta(1), epsilon(1). F(0) has three main subunits: a(1), b(2) and c(10-14). The alpha and beta chains form an alternating ring which encloses part of the gamma chain. F(1) is attached to F(0) by a central stalk formed by the gamma and epsilon chains, while a peripheral stalk is formed by the delta and b chains.

The protein localises to the cell membrane. In terms of biological role, f(1)F(0) ATP synthase produces ATP from ADP in the presence of a proton or sodium gradient. F-type ATPases consist of two structural domains, F(1) containing the extramembraneous catalytic core and F(0) containing the membrane proton channel, linked together by a central stalk and a peripheral stalk. During catalysis, ATP synthesis in the catalytic domain of F(1) is coupled via a rotary mechanism of the central stalk subunits to proton translocation. Functionally, this protein is part of the stalk that links CF(0) to CF(1). It either transmits conformational changes from CF(0) to CF(1) or is implicated in proton conduction. The sequence is that of ATP synthase subunit delta from Wolbachia sp. subsp. Brugia malayi (strain TRS).